The sequence spans 89 residues: Dynein light chain 2, cytoplasmic (89 aa).

This sequence belongs to the dynein light chain family.

It is found in the cytoplasm. Its subcellular location is the cytoskeleton. Its function is as follows. Acts as a non-catalytic accessory component of a dynein complex. The chain is Dynein light chain 2, cytoplasmic (Cdlc2) from Drosophila melanogaster (Fruit fly).